The following is an 82-amino-acid chain: Acyl carrier protein (82 aa).

The region spanning 3–77 (SSIFDKVQNI…QAIEFIQHAI (75 aa)) is the Carrier domain. Residue Ser-37 is modified to O-(pantetheine 4'-phosphoryl)serine.

This sequence belongs to the acyl carrier protein (ACP) family. In terms of processing, 4'-phosphopantetheine is transferred from CoA to a specific serine of apo-ACP by AcpS. This modification is essential for activity because fatty acids are bound in thioester linkage to the sulfhydryl of the prosthetic group.

It is found in the plastid. The protein resides in the chloroplast. It participates in lipid metabolism; fatty acid biosynthesis. Its function is as follows. Carrier of the growing fatty acid chain in fatty acid biosynthesis. This Gracilaria tenuistipitata var. liui (Red alga) protein is Acyl carrier protein.